The sequence spans 423 residues: Serine hydroxymethyltransferase (423 aa).

(6S)-5,6,7,8-tetrahydrofolate contacts are provided by residues Leu-120 and 124–126 (GHL). The residue at position 229 (Lys-229) is an N6-(pyridoxal phosphate)lysine. 353-355 (SPF) contacts (6S)-5,6,7,8-tetrahydrofolate.

It belongs to the SHMT family. Homodimer. The cofactor is pyridoxal 5'-phosphate.

Its subcellular location is the cytoplasm. The catalysed reaction is (6R)-5,10-methylene-5,6,7,8-tetrahydrofolate + glycine + H2O = (6S)-5,6,7,8-tetrahydrofolate + L-serine. It participates in one-carbon metabolism; tetrahydrofolate interconversion. Its pathway is amino-acid biosynthesis; glycine biosynthesis; glycine from L-serine: step 1/1. Catalyzes the reversible interconversion of serine and glycine with tetrahydrofolate (THF) serving as the one-carbon carrier. This reaction serves as the major source of one-carbon groups required for the biosynthesis of purines, thymidylate, methionine, and other important biomolecules. Also exhibits THF-independent aldolase activity toward beta-hydroxyamino acids, producing glycine and aldehydes, via a retro-aldol mechanism. This chain is Serine hydroxymethyltransferase, found in Prochlorococcus marinus (strain AS9601).